The primary structure comprises 168 residues: GTP-dependent dephospho-CoA kinase (168 aa).

Residues Asp-49, Val-50, Val-51, Asp-68, Lys-70, and Glu-120 each contribute to the GTP site.

It belongs to the GTP-dependent DPCK family.

The enzyme catalyses 3'-dephospho-CoA + GTP = GDP + CoA + H(+). It functions in the pathway cofactor biosynthesis; coenzyme A biosynthesis. In terms of biological role, catalyzes the GTP-dependent phosphorylation of the 3'-hydroxyl group of dephosphocoenzyme A to form coenzyme A (CoA). The sequence is that of GTP-dependent dephospho-CoA kinase from Pyrobaculum neutrophilum (strain DSM 2338 / JCM 9278 / NBRC 100436 / V24Sta) (Thermoproteus neutrophilus).